The chain runs to 351 residues: Anthranilate phosphoribosyltransferase (351 aa).

5-phospho-alpha-D-ribose 1-diphosphate-binding positions include G90, 93-94, T98, 100-103, 118-126, and S130; these read GD, NIST, and KHGNRSASG. G90 lines the anthranilate pocket. Residue S102 participates in Mg(2+) binding. Anthranilate is bound at residue N121. R176 is an anthranilate binding site. Mg(2+) is bound by residues D235 and E236.

This sequence belongs to the anthranilate phosphoribosyltransferase family. Homodimer. Mg(2+) serves as cofactor.

The enzyme catalyses N-(5-phospho-beta-D-ribosyl)anthranilate + diphosphate = 5-phospho-alpha-D-ribose 1-diphosphate + anthranilate. The protein operates within amino-acid biosynthesis; L-tryptophan biosynthesis; L-tryptophan from chorismate: step 2/5. Functionally, catalyzes the transfer of the phosphoribosyl group of 5-phosphorylribose-1-pyrophosphate (PRPP) to anthranilate to yield N-(5'-phosphoribosyl)-anthranilate (PRA). This Prochlorococcus marinus (strain MIT 9313) protein is Anthranilate phosphoribosyltransferase.